We begin with the raw amino-acid sequence, 295 residues long: Spermatogenesis-associated protein 4 (295 aa).

The interval 1-34 is disordered; sequence MAAAGQAEECLPLPAAESSKTSLPTPPAVPAGKK. In terms of domain architecture, Calponin-homology (CH) spans 48-154; it reads SRLSRSVLRW…QEIYTLLTHQ (107 aa). Residues 251–295 form a disordered region; sequence KRRYKSRGSKEKAAQPLSKSDNDGNARKEIHVKQSGNPCENTENL. The span at 270 to 282 shows a compositional bias: basic and acidic residues; that stretch reads SDNDGNARKEIHV. Polar residues predominate over residues 284 to 295; the sequence is QSGNPCENTENL.

As to expression, testis.

It is found in the nucleus. Its function is as follows. May play a role in apoptosis regulation. The polypeptide is Spermatogenesis-associated protein 4 (Spata4) (Mus musculus (Mouse)).